Reading from the N-terminus, the 151-residue chain is Nucleoside diphosphate kinase (151 aa).

Residues K9, F57, R86, T92, R103, and N113 each contribute to the ATP site. Catalysis depends on H116, which acts as the Pros-phosphohistidine intermediate.

It belongs to the NDK family. As to quaternary structure, homotetramer. The cofactor is Mg(2+).

Its subcellular location is the cytoplasm. The catalysed reaction is a 2'-deoxyribonucleoside 5'-diphosphate + ATP = a 2'-deoxyribonucleoside 5'-triphosphate + ADP. It carries out the reaction a ribonucleoside 5'-diphosphate + ATP = a ribonucleoside 5'-triphosphate + ADP. Functionally, major role in the synthesis of nucleoside triphosphates other than ATP. The ATP gamma phosphate is transferred to the NDP beta phosphate via a ping-pong mechanism, using a phosphorylated active-site intermediate. The sequence is that of Nucleoside diphosphate kinase from Chloroflexus aggregans (strain MD-66 / DSM 9485).